We begin with the raw amino-acid sequence, 257 residues long: MRYLKRLSWYISILILIVVIAGCGKGNETKEGSKEEQIKKSFAKTLDMYPIKNLEDLYDKEGYRDSEFKKSDKGTWTIYTDFAKSNKPGELDDEGMVLNLDRNTRTAKGHYFVTTFYRNGKLPDEKNYKIEMKNNKIILLDEVKDDKLKQKIENFKFFGQYANLKELRKYNNGDVSINENVPSYDVEYKMSNKDEIVKELRSRYNISTEKSPILKMHIDGDLKGSSVGYRKLEIDFSKRENSKLSVIEFLSYKPAKK.

The N-terminal stretch at 1–22 (MRYLKRLSWYISILILIVVIAG) is a signal peptide. Residue Cys23 is the site of N-palmitoyl cysteine attachment. The S-diacylglycerol cysteine moiety is linked to residue Cys23.

The protein belongs to the staphylococcal tandem lipoprotein family.

The protein resides in the cell membrane. This is an uncharacterized protein from Staphylococcus aureus (strain N315).